Reading from the N-terminus, the 385-residue chain is UPF0496 protein At3g28290 (385 aa).

Residues 138–214 (KDKENDVGKK…IEMEISSRKK (77 aa)) adopt a coiled-coil conformation. Transmembrane regions (helical) follow at residues 217–237 (IISNVLFIGAFVAVAVGSMVL) and 242–262 (VGAGVGVAGLLSLPLIAIGWV). Positions 267-294 (ILENKIQAREKQEEALKKAHRIANEMDK) form a coiled coil.

It belongs to the UPF0496 family. Widely expressed.

Its subcellular location is the membrane. The protein is UPF0496 protein At3g28290 of Arabidopsis thaliana (Mouse-ear cress).